The primary structure comprises 1531 residues: Lysophospholipase nte1 (1531 aa).

Topologically, residues 1 to 72 (MATGDGIIAA…TPPAPSTMVG (72 aa)) are cytoplasmic. A helical membrane pass occupies residues 73-93 (WIGWIFSFIFQVIPSVLYWIV). Over 94–115 (TFTTITLPTWLFTLFSMSLTFT) the chain is Lumenal. The chain crosses the membrane as a helical span at residues 116–136 (MNFTTLLLIALAVVSTISWFI). Residues 137 to 1531 (RYRFLNMYSR…RTLAPRRASI (1395 aa)) are Cytoplasmic-facing. Disordered stretches follow at residues 242–265 (GSDEELNRMAGESSDEDDHRPDGR), 303–385 (ASSA…TRRK), and 766–789 (NTSSSRVSGSAAAANDPRRKKQSR). Residues 325–343 (REMDDSPHVYQGDRLDPAS) are compositionally biased toward basic and acidic residues. A nucleoside 3',5'-cyclic phosphate-binding positions include 689–809 (GGTS…AVAS) and 849–969 (RLTS…IAQR). Positions 768-779 (SSSRVSGSAAAA) are enriched in low complexity. In terms of domain architecture, PNPLA spans 1228-1392 (LVLGGGGARG…IDNLTVDHMK (165 aa)). The GXGXXG signature appears at 1232–1237 (GGGARG). Positions 1259–1263 (GTSIG) match the GXSXG motif. The active-site Nucleophile is Ser-1261. Asp-1379 (proton acceptor) is an active-site residue. The DGA/G motif lies at 1379–1381 (DGG). Residues 1510–1531 (LPEETEEKKKLQRTLAPRRASI) are disordered.

It belongs to the NTE family.

The protein resides in the endoplasmic reticulum membrane. The catalysed reaction is a 1-acyl-sn-glycero-3-phosphocholine + H2O = sn-glycerol 3-phosphocholine + a fatty acid + H(+). With respect to regulation, inhibited by organophosphorus esters. Intracellular phospholipase B that catalyzes the double deacylation of phosphatidylcholine (PC) to glycerophosphocholine (GroPCho). Plays an important role in membrane lipid homeostasis. Responsible for the rapid PC turnover in response to inositol, elevated temperatures, or when choline is present in the growth medium. The protein is Lysophospholipase nte1 (nte1) of Aspergillus niger (strain ATCC MYA-4892 / CBS 513.88 / FGSC A1513).